Consider the following 372-residue polypeptide: Saccharopine dehydrogenase [NAD(+), L-lysine-forming] (372 aa).

L-saccharopine-binding residues include Arg17 and Lys76. The active-site Proton acceptor is the Lys76. The active-site Proton donor is the His95. Gln100 is an L-saccharopine binding site. NAD(+) is bound at residue Arg129. L-saccharopine is bound by residues Arg130 and Phe134. NAD(+) contacts are provided by residues 202–203 (GR), Asp226, Thr230, Tyr250, and Val277. Cys204 and Cys248 are disulfide-bonded. 278 to 280 (SAD) serves as a coordination point for L-saccharopine. NAD(+) is bound at residue 317 to 320 (IDHL). The Microbody targeting signal signature appears at 370-372 (SKL).

This sequence belongs to the AlaDH/PNT family. In terms of assembly, monomer.

Its subcellular location is the peroxisome. It catalyses the reaction L-saccharopine + NAD(+) + H2O = L-lysine + 2-oxoglutarate + NADH + H(+). It functions in the pathway amino-acid biosynthesis; L-lysine biosynthesis via AAA pathway; L-lysine from L-alpha-aminoadipate (fungal route): step 3/3. Its function is as follows. Catalyzes the NAD(+)-dependent cleavage of saccharopine to L-lysine and 2-oxoglutarate, the final step in the alpha-aminoadipate (AAA) pathway for lysin biosynthesis. The sequence is that of Saccharopine dehydrogenase [NAD(+), L-lysine-forming] (LYS1) from Candida glabrata (strain ATCC 2001 / BCRC 20586 / JCM 3761 / NBRC 0622 / NRRL Y-65 / CBS 138) (Yeast).